Reading from the N-terminus, the 801-residue chain is Protein ACCUMULATION AND REPLICATION OF CHLOROPLASTS 6, chloroplastic (801 aa).

A chloroplast-targeting transit peptide spans 1–67; the sequence is MEALSHVGIG…SSSFATATTT (67 aa). Topologically, residues 68 to 618 are stromal; the sequence is ATLVSPPPSI…ADMLKEASVK (551 aa). Residues 89–153 form the J domain; sequence DFYQVLGAQT…RSRREYNEGL (65 aa). The chain crosses the membrane as a helical span at residues 619 to 638; the sequence is ILAAGVAIGLISLFSQKYFL. Topologically, residues 639 to 801 are chloroplast intermembrane; that stretch reads KSSSSFQRKD…KITEGSVLAS (163 aa). Positions 639 to 801 are interaction with PDV2; sequence KSSSSFQRKD…KITEGSVLAS (163 aa).

Self-interacts. Part of a complex made of ARC3, ARC6, FTSZ1 and FTSZ2. Interacts with FTSZ2-1 and FTSZ2-2 (via C-terminus), but not with FTSZ1; this interaction enables ARC3 binding to FTSZ2. Binds to CDT1A. Interacts (via C-terminus) with PDV2 (via C-terminus) in the chloroplast intermembrane space; this interaction induces homodimerization and leads to the formation of a heterotetramer containing two ARC6 and two PDV2 subunits. Interacts with MCD1 in the chloroplast stroma and facilitates its subsequent binding to FtsZ2-1. Interacts (via J domain) with CJD1 (via J-like domain). Mostly expressed in young leaves.

It is found in the plastid. The protein localises to the chloroplast inner membrane. In terms of biological role, component of the plastid division machinery consisting in a binary fission accomplished by the simultaneous constriction of the FtsZ ring on the stromal side of the inner envelope membrane, and the ARC5 ring on the cytosolic side of the outer envelope membrane. Involved in the initiation of proplastid and plastid division (including chloroplasts, statoliths and leukoplasts). Promotes the assembly and/or stabilization of the plastid-dividing FtsZ ring, functioning as an antagonistic regulator of FtsZ dynamics against CDP1 and facilitating MCD1 positioning to membrane tethered FtsZ filaments to form the chloroplast Z-Ring; inhibits GDP-induced disassembly of FTSZ2 but enables ARC3 binding to FTSZ2-1. Relays plastid division site position between stroma and outer surface via interactions with the stromal FtsZ ring and the outer membrane PDV2 that recruits cytoplasmic ARC5 ring. Required for plastid equatorial positioning of PDV2 and ARC5. May contribute to gravitropism in stems and hypocotyls. Seems to influence stromule (stroma-filled tubular extensions of the plastid envelope membrane) length and frequency. The protein is Protein ACCUMULATION AND REPLICATION OF CHLOROPLASTS 6, chloroplastic of Arabidopsis thaliana (Mouse-ear cress).